The primary structure comprises 363 residues: GDSL esterase/lipase At2g24560 (363 aa).

Positions 1-22 (MSTSKTITFTLFIAALLSSCDA) are cleaved as a signal peptide. The N-linked (GlcNAc...) asparagine glycan is linked to asparagine 25. Serine 41 acts as the Nucleophile in catalysis. 2 N-linked (GlcNAc...) asparagine glycosylation sites follow: asparagine 103 and asparagine 325. Residues aspartate 333 and histidine 336 contribute to the active site.

The protein belongs to the 'GDSL' lipolytic enzyme family.

It is found in the secreted. This is GDSL esterase/lipase At2g24560 from Arabidopsis thaliana (Mouse-ear cress).